The primary structure comprises 628 residues: Very-long-chain aldehyde decarbonylase GL1-2 (628 aa).

The next 5 helical transmembrane spans lie at 37–57 (GAAP…ARGL), 131–151 (GWAI…YWAH), 191–211 (VVIG…VGLV), 299–319 (DFVF…PFVL), and 331–351 (FVLL…WCCS). The 141-residue stretch at 137 to 277 (LLHVLVAEPL…MPIFDLLGGT (141 aa)) folds into the Fatty acid hydroxylase domain.

This sequence belongs to the sterol desaturase family. As to quaternary structure, homodimer.

The protein resides in the endoplasmic reticulum membrane. It carries out the reaction a long-chain fatty aldehyde + 2 NADPH + O2 + H(+) = a long-chain alkane + formate + 2 NADP(+) + H2O. Its function is as follows. Aldehyde decarbonylase involved in the conversion of aldehydes to alkanes. Core component of a very-long-chain alkane synthesis complex. This chain is Very-long-chain aldehyde decarbonylase GL1-2, found in Oryza sativa subsp. indica (Rice).